The primary structure comprises 217 residues: MRTPHLPEAIATRKYFDREFDRQAIKLLPNEYYVTGEDVVLTTVLGSCVAACIRDEKAGVGGMNHFMLPDDEGGTADRMLSASMRYGCYALEVLINELLKMGARRERLEAKVFGGGAVLANMTTLNIGDRNADFVLRYLKTEEIRVAAQDLRGPHARRVSYFPVTGLALVRRLTRQDDQVSVERDERALARAIATSGTAPSRGGELFTRASASRTPS.

The segment at 194–217 (ATSGTAPSRGGELFTRASASRTPS) is disordered.

The protein belongs to the CheD family.

It catalyses the reaction L-glutaminyl-[protein] + H2O = L-glutamyl-[protein] + NH4(+). In terms of biological role, probably deamidates glutamine residues to glutamate on methyl-accepting chemotaxis receptors (MCPs), playing an important role in chemotaxis. This Cupriavidus pinatubonensis (strain JMP 134 / LMG 1197) (Cupriavidus necator (strain JMP 134)) protein is Probable chemoreceptor glutamine deamidase CheD.